A 371-amino-acid polypeptide reads, in one-letter code: Cytochrome b (371 aa).

4 helical membrane passes run 25 to 45 (FGSMLLACSSMQVLTGFFLAV), 69 to 90 (WMMQNLHAIGASMFFICIYTHI), 105 to 125 (WLSGTTLLIMLMATAFFGYVL), and 170 to 190 (FFALHFILPFGIISLSSLHIM). Residues H75 and H89 each contribute to the heme b site. The heme b site is built by H174 and H188. H193 lines the a ubiquinone pocket. Helical transmembrane passes span 218-238 (YKDMLMLSLMILALLMTVAFF), 280-300 (LGGALALVMSIMILLTAPFTH), 312-332 (IMQLMFWTLVATFAVITWAAT), and 339-358 (FTTISQVASTMYFMFFITNP).

Belongs to the cytochrome b family. The cytochrome bc1 complex contains 3 respiratory subunits (MT-CYB, CYC1 and UQCRFS1), 2 core proteins (UQCRC1 and UQCRC2) and probably 6 low-molecular weight proteins. It depends on heme b as a cofactor.

It is found in the mitochondrion inner membrane. Component of the ubiquinol-cytochrome c reductase complex (complex III or cytochrome b-c1 complex) that is part of the mitochondrial respiratory chain. The b-c1 complex mediates electron transfer from ubiquinol to cytochrome c. Contributes to the generation of a proton gradient across the mitochondrial membrane that is then used for ATP synthesis. The chain is Cytochrome b (MT-CYB) from Eryx colubrinus colubrinus.